The sequence spans 511 residues: 2-isopropylmalate synthase (511 aa).

The Pyruvate carboxyltransferase domain occupies 5-267 (LFIFDTTLRD…DTRIDATQIV (263 aa)). The Mn(2+) site is built by Asp14, His202, His204, and Asn238. A regulatory domain region spans residues 393–511 (KLLSMKVCSE…SKRERAHPQV (119 aa)).

It belongs to the alpha-IPM synthase/homocitrate synthase family. LeuA type 1 subfamily. In terms of assembly, homodimer. Mn(2+) serves as cofactor.

It localises to the cytoplasm. It catalyses the reaction 3-methyl-2-oxobutanoate + acetyl-CoA + H2O = (2S)-2-isopropylmalate + CoA + H(+). It participates in amino-acid biosynthesis; L-leucine biosynthesis; L-leucine from 3-methyl-2-oxobutanoate: step 1/4. Catalyzes the condensation of the acetyl group of acetyl-CoA with 3-methyl-2-oxobutanoate (2-ketoisovalerate) to form 3-carboxy-3-hydroxy-4-methylpentanoate (2-isopropylmalate). The protein is 2-isopropylmalate synthase of Thiobacillus denitrificans (strain ATCC 25259 / T1).